The primary structure comprises 837 residues: Protein ROD1 (837 aa).

Phosphoserine occurs at positions 138 and 141. Lys-401 participates in a covalent cross-link: Glycyl lysine isopeptide (Lys-Gly) (interchain with G-Cter in ubiquitin). The residue at position 436 (Ser-436) is a Phosphoserine. The PY-motif motif lies at 487-490; it reads PPNY. Ser-536 bears the Phosphoserine mark. The short motif at 656–659 is the PY-motif element; sequence PPAY. 2 disordered regions span residues 675 to 726 and 763 to 837; these read ERPQ…SVSL and SFTS…RDRS. Residues 685–703 show a composition bias toward low complexity; it reads TSSLLPLPGSSKSSNNLKR. A compositionally biased stretch (polar residues) spans 716 to 726; the sequence is PRNNSGSSVSL. Residues Ser-720 and Ser-725 each carry the phosphoserine modification. Low complexity predominate over residues 763–773; sequence SFTSNSSSKNN. Over residues 774-792 the composition is skewed to basic and acidic residues; that stretch reads SHFDKTDSTSDANKPREEE. A compositionally biased stretch (low complexity) spans 805–815; sequence SSSVRSNNSNS.

Belongs to the arrestin family. Interacts with RSP5 via its 2 PY-motifs.

The protein resides in the membrane. Mediates resistance to o-dinitrobenzene, calcium and zinc. This chain is Protein ROD1 (ROD1), found in Saccharomyces cerevisiae (strain ATCC 204508 / S288c) (Baker's yeast).